The sequence spans 215 residues: LexA repressor (215 aa).

The segment at residues 28-48 (RAEIAAELGFSSPNAAEEHLR) is a DNA-binding region (H-T-H motif). Residues Ser-133 and Lys-170 each act as for autocatalytic cleavage activity in the active site.

The protein belongs to the peptidase S24 family. As to quaternary structure, homodimer.

It catalyses the reaction Hydrolysis of Ala-|-Gly bond in repressor LexA.. Its function is as follows. Represses a number of genes involved in the response to DNA damage (SOS response), including recA and lexA. In the presence of single-stranded DNA, RecA interacts with LexA causing an autocatalytic cleavage which disrupts the DNA-binding part of LexA, leading to derepression of the SOS regulon and eventually DNA repair. This Burkholderia ambifaria (strain MC40-6) protein is LexA repressor.